A 200-amino-acid polypeptide reads, in one-letter code: Large ribosomal subunit protein bL25 (200 aa).

It belongs to the bacterial ribosomal protein bL25 family. CTC subfamily. In terms of assembly, part of the 50S ribosomal subunit; part of the 5S rRNA/L5/L18/L25 subcomplex. Contacts the 5S rRNA. Binds to the 5S rRNA independently of L5 and L18.

Its function is as follows. This is one of the proteins that binds to the 5S RNA in the ribosome where it forms part of the central protuberance. The chain is Large ribosomal subunit protein bL25 from Corynebacterium glutamicum (strain ATCC 13032 / DSM 20300 / JCM 1318 / BCRC 11384 / CCUG 27702 / LMG 3730 / NBRC 12168 / NCIMB 10025 / NRRL B-2784 / 534).